The primary structure comprises 306 residues: tRNA dimethylallyltransferase (306 aa).

2–9 (GPTASGKT) contributes to the ATP binding site. Position 4-9 (4-9 (TASGKT)) interacts with substrate. Interaction with substrate tRNA regions lie at residues 27–30 (DSVQ) and 152–156 (QRIVR).

It belongs to the IPP transferase family. In terms of assembly, monomer. Mg(2+) serves as cofactor.

The catalysed reaction is adenosine(37) in tRNA + dimethylallyl diphosphate = N(6)-dimethylallyladenosine(37) in tRNA + diphosphate. Catalyzes the transfer of a dimethylallyl group onto the adenine at position 37 in tRNAs that read codons beginning with uridine, leading to the formation of N6-(dimethylallyl)adenosine (i(6)A). The chain is tRNA dimethylallyltransferase from Magnetococcus marinus (strain ATCC BAA-1437 / JCM 17883 / MC-1).